We begin with the raw amino-acid sequence, 98 residues long: NADH-ubiquinone oxidoreductase chain 4L (98 aa).

Transmembrane regions (helical) follow at residues 1–21 (MTPIQFTFSSAFLLGLSGLAF), 26–46 (LLSALLCLEGMMLSLFIALSL), and 59–79 (APMLLLAFSACEASVGLALMV).

It belongs to the complex I subunit 4L family.

Its subcellular location is the mitochondrion membrane. It catalyses the reaction a ubiquinone + NADH + 5 H(+)(in) = a ubiquinol + NAD(+) + 4 H(+)(out). Core subunit of the mitochondrial membrane respiratory chain NADH dehydrogenase (Complex I) which catalyzes electron transfer from NADH through the respiratory chain, using ubiquinone as an electron acceptor. Part of the enzyme membrane arm which is embedded in the lipid bilayer and involved in proton translocation. This Tetraodon nigroviridis (Spotted green pufferfish) protein is NADH-ubiquinone oxidoreductase chain 4L (MT-ND4L).